A 137-amino-acid chain; its full sequence is Early nodulin-55-1 (137 aa).

Residues 1–67 (KYDERTESVH…GLKLMVVVMS (67 aa)) enclose the Phytocyanin domain. N-linked (GlcNAc...) asparagine glycans are attached at residues Asn-13, Asn-51, and Asn-68. Cys-20 and Cys-55 are disulfide-bonded. A disordered region spans residues 70–115 (TKKKLIHSPSPSSPSPSPSPSPSPSPSPSPSLSSPSPSPLPNNQGV). Over residues 80–98 (PSSPSPSPSPSPSPSPSPS) the composition is skewed to pro residues.

Belongs to the early nodulin-like (ENODL) family.

It localises to the symbiosome. The protein localises to the peribacteroid membrane. Functionally, may act as a carbohydrate transporter. This chain is Early nodulin-55-1, found in Glycine max (Soybean).